A 246-amino-acid chain; its full sequence is DNA repair protein RecO (246 aa).

It belongs to the RecO family.

In terms of biological role, involved in DNA repair and RecF pathway recombination. This chain is DNA repair protein RecO, found in Bifidobacterium adolescentis (strain ATCC 15703 / DSM 20083 / NCTC 11814 / E194a).